A 468-amino-acid chain; its full sequence is Probable 1,4-beta-D-glucan cellobiohydrolase C (468 aa).

An N-terminal signal peptide occupies residues Met-1 to Ala-18. Positions Gln-19 to Leu-54 constitute a CBM1 domain. Intrachain disulfides connect Cys-26/Cys-43 and Cys-37/Cys-53. Residues Thr-57–Thr-106 form a thr-rich linker region. Residues Thr-68–Ser-107 form a disordered region. The catalytic stretch occupies residues Ser-107–Phe-468. Asp-198 is an active-site residue. Disulfide bonds link Cys-199–Cys-258 and Cys-390–Cys-437. Catalysis depends on Asp-244, which acts as the Proton donor. Asp-423 functions as the Nucleophile in the catalytic mechanism.

This sequence belongs to the glycosyl hydrolase 6 (cellulase B) family.

The protein resides in the secreted. The catalysed reaction is Hydrolysis of (1-&gt;4)-beta-D-glucosidic linkages in cellulose and cellotetraose, releasing cellobiose from the non-reducing ends of the chains.. The biological conversion of cellulose to glucose generally requires three types of hydrolytic enzymes: (1) Endoglucanases which cut internal beta-1,4-glucosidic bonds; (2) Exocellobiohydrolases that cut the disaccharide cellobiose from the non-reducing end of the cellulose polymer chain; (3) Beta-1,4-glucosidases which hydrolyze the cellobiose and other short cello-oligosaccharides to glucose. The protein is Probable 1,4-beta-D-glucan cellobiohydrolase C (cbhC) of Aspergillus terreus (strain NIH 2624 / FGSC A1156).